The primary structure comprises 95 residues: UPF0213 protein YPA_2977 (95 aa).

The GIY-YIG domain occupies 4–79 (SLWHLYLLRT…KQLSKQQKEK (76 aa)).

Belongs to the UPF0213 family.

The protein is UPF0213 protein YPA_2977 of Yersinia pestis bv. Antiqua (strain Antiqua).